Here is a 911-residue protein sequence, read N- to C-terminus: FIGNL1-interacting regulator of recombination and mitosis (911 aa).

Residues 830–853 (SEKSQPAQTPLTEEPCAKRARQET) form a disordered region. Residues 844–853 (PCAKRARQET) are compositionally biased toward basic and acidic residues.

It localises to the chromosome. The protein resides in the centromere. Its subcellular location is the kinetochore. It is found in the nucleus. The protein localises to the midbody. It localises to the cytoplasm. The protein resides in the cytoskeleton. Its subcellular location is the spindle. May play a role in chromosome segregation. This Danio rerio (Zebrafish) protein is FIGNL1-interacting regulator of recombination and mitosis.